We begin with the raw amino-acid sequence, 107 residues long: EMBRYO SURROUNDING FACTOR 1-like protein 5 (107 aa).

The N-terminal stretch at 1-22 is a signal peptide; that stretch reads MSLLRFAILCIIFVSLFGVHEC. Cystine bridges form between cysteine 35-cysteine 49, cysteine 40-cysteine 69, cysteine 47-cysteine 65, and cysteine 50-cysteine 58. The chain crosses the membrane as a helical span at residues 87-107; that stretch reads GLGPPIYLFFLGQFIYFVLGL.

This sequence belongs to the MEG family. As to expression, expressed in flowers.

It localises to the membrane. The protein is EMBRYO SURROUNDING FACTOR 1-like protein 5 (ESFL5) of Arabidopsis thaliana (Mouse-ear cress).